A 501-amino-acid chain; its full sequence is Ribonuclease Y (501 aa).

The chain crosses the membrane as a helical span at residues 7–27 (LVVIALLGALTLLTAGHVLAL). The KH domain maps to 190 to 256 (VVRAVPLPEE…RLTLEKLVAD (67 aa)). An HD domain is found at 316–409 (VLAHLVESAH…TQAADAISGG (94 aa)).

It belongs to the RNase Y family.

It is found in the cell membrane. Functionally, endoribonuclease that initiates mRNA decay. This is Ribonuclease Y from Thermobifida fusca (strain YX).